We begin with the raw amino-acid sequence, 303 residues long: Quinolinate synthase (303 aa).

Positions 23 and 40 each coordinate iminosuccinate. Cys-85 contacts [4Fe-4S] cluster. Residues 111-113 and Ser-128 contribute to the iminosuccinate site; that span reads YVN. Cys-171 contributes to the [4Fe-4S] cluster binding site. Iminosuccinate is bound by residues 197 to 199 and Thr-214; that span reads HPE. Cys-259 contacts [4Fe-4S] cluster.

Belongs to the quinolinate synthase family. Type 2 subfamily. Requires [4Fe-4S] cluster as cofactor.

The protein resides in the cytoplasm. The enzyme catalyses iminosuccinate + dihydroxyacetone phosphate = quinolinate + phosphate + 2 H2O + H(+). Its pathway is cofactor biosynthesis; NAD(+) biosynthesis; quinolinate from iminoaspartate: step 1/1. Catalyzes the condensation of iminoaspartate with dihydroxyacetone phosphate to form quinolinate. This Thermodesulfovibrio yellowstonii (strain ATCC 51303 / DSM 11347 / YP87) protein is Quinolinate synthase.